Consider the following 329-residue polypeptide: Beta-ketoacyl-[acyl-carrier-protein] synthase III (329 aa).

Catalysis depends on residues C113 and H255. The interval 256 to 260 (QANQR) is ACP-binding. The active site involves N285.

This sequence belongs to the thiolase-like superfamily. FabH family. As to quaternary structure, homodimer.

It localises to the cytoplasm. It carries out the reaction malonyl-[ACP] + acetyl-CoA + H(+) = 3-oxobutanoyl-[ACP] + CO2 + CoA. It participates in lipid metabolism; fatty acid biosynthesis. Its function is as follows. Catalyzes the condensation reaction of fatty acid synthesis by the addition to an acyl acceptor of two carbons from malonyl-ACP. Catalyzes the first condensation reaction which initiates fatty acid synthesis and may therefore play a role in governing the total rate of fatty acid production. Possesses both acetoacetyl-ACP synthase and acetyl transacylase activities. Its substrate specificity determines the biosynthesis of branched-chain and/or straight-chain of fatty acids. This Chlorobium phaeobacteroides (strain DSM 266 / SMG 266 / 2430) protein is Beta-ketoacyl-[acyl-carrier-protein] synthase III.